The chain runs to 168 residues: NADH-quinone oxidoreductase subunit B (168 aa).

4 residues coordinate [4Fe-4S] cluster: Cys49, Cys50, Cys114, and Cys144.

The protein belongs to the complex I 20 kDa subunit family. In terms of assembly, NDH-1 is composed of 14 different subunits. Subunits NuoB, C, D, E, F, and G constitute the peripheral sector of the complex. [4Fe-4S] cluster is required as a cofactor.

Its subcellular location is the cell membrane. It carries out the reaction a quinone + NADH + 5 H(+)(in) = a quinol + NAD(+) + 4 H(+)(out). NDH-1 shuttles electrons from NADH, via FMN and iron-sulfur (Fe-S) centers, to quinones in the respiratory chain. Couples the redox reaction to proton translocation (for every two electrons transferred, four hydrogen ions are translocated across the cytoplasmic membrane), and thus conserves the redox energy in a proton gradient. In Wolbachia pipientis wMel, this protein is NADH-quinone oxidoreductase subunit B.